A 340-amino-acid chain; its full sequence is Uroporphyrinogen decarboxylase (340 aa).

Substrate is bound by residues 23–27 (RQAGR), aspartate 72, tyrosine 147, threonine 202, and histidine 316.

The protein belongs to the uroporphyrinogen decarboxylase family. In terms of assembly, homodimer.

The protein resides in the cytoplasm. It catalyses the reaction uroporphyrinogen III + 4 H(+) = coproporphyrinogen III + 4 CO2. It participates in porphyrin-containing compound metabolism; protoporphyrin-IX biosynthesis; coproporphyrinogen-III from 5-aminolevulinate: step 4/4. Functionally, catalyzes the decarboxylation of four acetate groups of uroporphyrinogen-III to yield coproporphyrinogen-III. The polypeptide is Uroporphyrinogen decarboxylase (Trichlorobacter lovleyi (strain ATCC BAA-1151 / DSM 17278 / SZ) (Geobacter lovleyi)).